We begin with the raw amino-acid sequence, 330 residues long: Probable WRKY transcription factor 74 (330 aa).

Residues lysine 256 to isoleucine 322 constitute a DNA-binding region (WRKY).

The protein resides in the nucleus. Its function is as follows. Transcription factor. Interacts specifically with the W box (5'-(T)TGAC[CT]-3'), a frequently occurring elicitor-responsive cis-acting element. This is Probable WRKY transcription factor 74 (WRKY74) from Arabidopsis thaliana (Mouse-ear cress).